Reading from the N-terminus, the 310-residue chain is tRNA pseudouridine synthase B (310 aa).

Aspartate 38 serves as the catalytic Nucleophile.

This sequence belongs to the pseudouridine synthase TruB family. Type 1 subfamily.

It carries out the reaction uridine(55) in tRNA = pseudouridine(55) in tRNA. Its function is as follows. Responsible for synthesis of pseudouridine from uracil-55 in the psi GC loop of transfer RNAs. The sequence is that of tRNA pseudouridine synthase B from Geotalea uraniireducens (strain Rf4) (Geobacter uraniireducens).